The primary structure comprises 312 residues: Malate dehydrogenase (312 aa).

NAD(+) is bound by residues 7 to 13 and Asp-34; that span reads GAAGGIG. Residues Arg-81 and Arg-87 each contribute to the substrate site. Residues Asn-94 and 117–119 each bind NAD(+); that span reads ITN. Substrate contacts are provided by Asn-119 and Arg-153. His-177 acts as the Proton acceptor in catalysis. Residue Met-227 participates in NAD(+) binding.

Belongs to the LDH/MDH superfamily. MDH type 1 family. As to quaternary structure, homodimer.

The enzyme catalyses (S)-malate + NAD(+) = oxaloacetate + NADH + H(+). In terms of biological role, catalyzes the reversible oxidation of malate to oxaloacetate. The polypeptide is Malate dehydrogenase (Salmonella newport (strain SL254)).